The sequence spans 204 residues: Large ribosomal subunit protein eL15 (204 aa).

This sequence belongs to the eukaryotic ribosomal protein eL15 family. As to quaternary structure, component of the large ribosomal subunit.

It localises to the cytoplasm. Its function is as follows. Component of the large ribosomal subunit. The ribosome is a large ribonucleoprotein complex responsible for the synthesis of proteins in the cell. This is Large ribosomal subunit protein eL15 (rpl15) from Carassius auratus (Goldfish).